The chain runs to 161 residues: Allophycocyanin beta chain (161 aa).

Position 71 is an N4-methylasparagine (N71). C81 is a (2R,3E)-phycocyanobilin binding site.

The protein belongs to the phycobiliprotein family. In terms of assembly, heterodimer of an alpha and a beta chain. In terms of processing, contains one covalently linked phycocyanobilin chromophore.

It is found in the cellular thylakoid membrane. Its function is as follows. Light-harvesting photosynthetic bile pigment-protein from the phycobiliprotein complex. Allophycocyanin has a maximum absorption at approximately 650 nanometers. The polypeptide is Allophycocyanin beta chain (apcB) (Synechococcus sp. (strain ATCC 27144 / PCC 6301 / SAUG 1402/1) (Anacystis nidulans)).